The following is a 291-amino-acid chain: Transmembrane protein 41B (291 aa).

The disordered stretch occupies residues 1-39 (MAKGRVAERSQLGAHHTTPVGDGAAGTRGLAAPGSRDHQ). T18 is subject to Phosphothreonine. Residue S35 is modified to Phosphoserine. Transmembrane regions (helical) follow at residues 52 to 72 (MSLL…FLVY), 109 to 129 (FYVQ…TFAI), 147 to 169 (LALF…LSYL), 197 to 217 (LINY…FINI), 225 to 245 (PLKV…FVAI), and 262 to 282 (SWNS…PAIF). The VTT domain; required for its function in autophagy stretch occupies residues 140–251 (GFLYPFPLAL…FVAIKAGTTL (112 aa)).

It belongs to the TMEM41 family. Interacts with VMP1. Interacts with COPA, COPB1, VDAC1 and ERLIN2. Interacts with ATG2A. Interacts with SURF4. As to quaternary structure, (Microbial infection) Interacts with Zika virus NS4A protein and Yellow fever virus NS4B protein.

Its subcellular location is the endoplasmic reticulum membrane. It is found in the endomembrane system. The protein resides in the cytoplasm. The enzyme catalyses a 1,2-diacyl-sn-glycero-3-phospho-L-serine(in) = a 1,2-diacyl-sn-glycero-3-phospho-L-serine(out). It catalyses the reaction cholesterol(in) = cholesterol(out). It carries out the reaction a 1,2-diacyl-sn-glycero-3-phosphocholine(in) = a 1,2-diacyl-sn-glycero-3-phosphocholine(out). The catalysed reaction is a 1,2-diacyl-sn-glycero-3-phosphoethanolamine(in) = a 1,2-diacyl-sn-glycero-3-phosphoethanolamine(out). Its function is as follows. Phospholipid scramblase involved in lipid homeostasis and membrane dynamics processes. Has phospholipid scramblase activity toward cholesterol and phosphatidylserine, as well as phosphatidylethanolamine and phosphatidylcholine. Required for autophagosome formation: participates in early stages of autophagosome biogenesis at the endoplasmic reticulum (ER) membrane by reequilibrating the leaflets of the ER as lipids are extracted by ATG2 (ATG2A or ATG2B) to mediate autophagosome assembly. In addition to autophagy, involved in other processes in which phospholipid scramblase activity is required. Required for normal motor neuron development. In terms of biological role, (Microbial infection) Critical host factor required for infection by human coronaviruses SARS-CoV-2, HCoV-OC43, HCoV-NL63, and HCoV-229E, as well as all flaviviruses tested such as Zika virus and Yellow fever virus. Required post-entry of the virus to facilitate the ER membrane remodeling necessary to form replication organelles. The chain is Transmembrane protein 41B from Homo sapiens (Human).